Reading from the N-terminus, the 294-residue chain is Store-operated calcium entry regulator STIMATE (294 aa).

Positions 1 to 22 are disordered; that stretch reads MQGPAGNASRGLPGGPPSTVAS. The Cytoplasmic portion of the chain corresponds to 1-28; sequence MQGPAGNASRGLPGGPPSTVASGAGRCE. 3 helical membrane-spanning segments follow: residues 29–49, 69–89, and 102–122; these read SGAL…VVAF, IWFL…FANV, and LYLI…YVGV. The GXXXG motif motif lies at 149 to 153; that stretch reads GAWVG. The next 2 helical transmembrane spans lie at 156-176 and 194-214; these read ALYI…LLIL and LAIV…WVVD. The Cytoplasmic portion of the chain corresponds to 215–294; sequence NFLMRKGKTK…KKKHRFGLPV (80 aa). Residues 227–268 are disordered; that stretch reads LEERGANQDSRNGSKVRYRRAASHEESESEILISADDEMEES. A required for localization in the endoplasmic reticulum region spans residues 241-246; sequence KVRYRR.

Belongs to the STIMATE family. In terms of assembly, homooligomer. Interacts with STIM1. Widely expressed.

Its subcellular location is the endoplasmic reticulum membrane. In terms of biological role, acts as a regulator of store-operated Ca(2+) entry (SOCE) at junctional sites that connect the endoplasmic reticulum (ER) and plasma membrane (PM), called ER-plasma membrane (ER-PM) junction or cortical ER. SOCE is a Ca(2+) influx following depletion of intracellular Ca(2+) stores. Acts by interacting with STIM1, promoting STIM1 conformational switch. Involved in STIM1 relocalization to ER-PM junctions. Contributes to the maintenance and reorganization of store-dependent ER-PM junctions. The protein is Store-operated calcium entry regulator STIMATE of Homo sapiens (Human).